Consider the following 514-residue polypeptide: 2,3-bisphosphoglycerate-independent phosphoglycerate mutase (514 aa).

Residues D13 and S63 each contribute to the Mn(2+) site. S63 serves as the catalytic Phosphoserine intermediate. Residues H124, 154 to 155 (RD), R186, R192, 258 to 261 (RADR), and K332 contribute to the substrate site. Positions 399, 403, 440, 441, and 459 each coordinate Mn(2+).

This sequence belongs to the BPG-independent phosphoglycerate mutase family. In terms of assembly, monomer. Mn(2+) serves as cofactor.

The catalysed reaction is (2R)-2-phosphoglycerate = (2R)-3-phosphoglycerate. Its pathway is carbohydrate degradation; glycolysis; pyruvate from D-glyceraldehyde 3-phosphate: step 3/5. Its function is as follows. Catalyzes the interconversion of 2-phosphoglycerate and 3-phosphoglycerate. The sequence is that of 2,3-bisphosphoglycerate-independent phosphoglycerate mutase from Legionella pneumophila (strain Corby).